The sequence spans 194 residues: MGVTPVSNEPLVAQQPKGIIDPSTGKPIGSNDAFFGEINNELADKGFLVTSTDELINWARTGSLMWMTFGLACCAVEMMQLSMPRYDVERFGFAPRASPRQSDVMIVAGTLTNKMAPALRKVYDQMPEPRYVISMGSCANGGGYYHYSYSVVRGCDRVVPIDIYVPGCPPTAEALLYGVLLLQKKIRRTGTIER.

Positions 73, 74, 138, and 168 each coordinate [4Fe-4S] cluster.

The protein belongs to the complex I 20 kDa subunit family. In terms of assembly, NDH-1 is composed of 14 different subunits. Subunits NuoB, C, D, E, F, and G constitute the peripheral sector of the complex. Requires [4Fe-4S] cluster as cofactor.

The protein localises to the cell inner membrane. It catalyses the reaction a quinone + NADH + 5 H(+)(in) = a quinol + NAD(+) + 4 H(+)(out). Functionally, NDH-1 shuttles electrons from NADH, via FMN and iron-sulfur (Fe-S) centers, to quinones in the respiratory chain. The immediate electron acceptor for the enzyme in this species is believed to be ubiquinone. Couples the redox reaction to proton translocation (for every two electrons transferred, four hydrogen ions are translocated across the cytoplasmic membrane), and thus conserves the redox energy in a proton gradient. The protein is NADH-quinone oxidoreductase subunit B 1 of Rhizobium etli (strain CIAT 652).